A 433-amino-acid polypeptide reads, in one-letter code: Enolase (433 aa).

Glutamine 167 contributes to the (2R)-2-phosphoglycerate binding site. Residue glutamate 209 is the Proton donor of the active site. Mg(2+) contacts are provided by aspartate 246, glutamate 291, and aspartate 318. Lysine 343, arginine 372, serine 373, and lysine 394 together coordinate (2R)-2-phosphoglycerate. Lysine 343 acts as the Proton acceptor in catalysis.

Belongs to the enolase family. Component of the RNA degradosome, a multiprotein complex involved in RNA processing and mRNA degradation. It depends on Mg(2+) as a cofactor.

Its subcellular location is the cytoplasm. The protein localises to the secreted. The protein resides in the cell surface. The enzyme catalyses (2R)-2-phosphoglycerate = phosphoenolpyruvate + H2O. The protein operates within carbohydrate degradation; glycolysis; pyruvate from D-glyceraldehyde 3-phosphate: step 4/5. Functionally, catalyzes the reversible conversion of 2-phosphoglycerate (2-PG) into phosphoenolpyruvate (PEP). It is essential for the degradation of carbohydrates via glycolysis. The chain is Enolase from Aeromonas hydrophila subsp. hydrophila (strain ATCC 7966 / DSM 30187 / BCRC 13018 / CCUG 14551 / JCM 1027 / KCTC 2358 / NCIMB 9240 / NCTC 8049).